The primary structure comprises 433 residues: Enolase (433 aa).

Q167 is a binding site for (2R)-2-phosphoglycerate. E209 functions as the Proton donor in the catalytic mechanism. 3 residues coordinate Mg(2+): D246, E291, and D318. Positions 343, 372, 373, and 394 each coordinate (2R)-2-phosphoglycerate. Residue K343 is the Proton acceptor of the active site.

Belongs to the enolase family. Component of the RNA degradosome, a multiprotein complex involved in RNA processing and mRNA degradation. It depends on Mg(2+) as a cofactor.

The protein resides in the cytoplasm. It is found in the secreted. The protein localises to the cell surface. It carries out the reaction (2R)-2-phosphoglycerate = phosphoenolpyruvate + H2O. It functions in the pathway carbohydrate degradation; glycolysis; pyruvate from D-glyceraldehyde 3-phosphate: step 4/5. Catalyzes the reversible conversion of 2-phosphoglycerate (2-PG) into phosphoenolpyruvate (PEP). It is essential for the degradation of carbohydrates via glycolysis. This Aeromonas hydrophila subsp. hydrophila (strain ATCC 7966 / DSM 30187 / BCRC 13018 / CCUG 14551 / JCM 1027 / KCTC 2358 / NCIMB 9240 / NCTC 8049) protein is Enolase.